A 193-amino-acid chain; its full sequence is Mediator of RNA polymerase II transcription subunit 30 (193 aa).

Residues 1–20 form a disordered region; sequence MSTPPLAASGMAPGPFAGPQ. Position 2 is an N-acetylserine (Ser2). A compositionally biased stretch (low complexity) spans 10-20; it reads GMAPGPFAGPQ. Residues 71-93 adopt a coiled-coil conformation; the sequence is YQDRLAKLQDHLRQLSILFRKLR.

Belongs to the Mediator complex subunit 30 family. Component of the Mediator complex, which is composed of MED1, MED4, MED6, MED7, MED8, MED9, MED10, MED11, MED12, MED13, MED13L, MED14, MED15, MED16, MED17, MED18, MED19, MED20, MED21, MED22, MED23, MED24, MED25, MED26, MED27, MED29, MED30, MED31, CCNC, CDK8 and CDC2L6/CDK11. The MED12, MED13, CCNC and CDK8 subunits form a distinct module termed the CDK8 module. Mediator containing the CDK8 module is less active than Mediator lacking this module in supporting transcriptional activation. Individual preparations of the Mediator complex lacking one or more distinct subunits have been variously termed ARC, CRSP, DRIP, PC2, SMCC and TRAP.

The protein resides in the nucleus. Functionally, component of the Mediator complex, a coactivator involved in the regulated transcription of nearly all RNA polymerase II-dependent genes. Mediator functions as a bridge to convey information from gene-specific regulatory proteins to the basal RNA polymerase II transcription machinery. Mediator is recruited to promoters by direct interactions with regulatory proteins and serves as a scaffold for the assembly of a functional preinitiation complex with RNA polymerase II and the general transcription factors. In Bos taurus (Bovine), this protein is Mediator of RNA polymerase II transcription subunit 30 (MED30).